We begin with the raw amino-acid sequence, 276 residues long: 4-deoxy-L-threo-5-hexosulose-uronate ketol-isomerase (276 aa).

Positions 194, 196, 201, and 243 each coordinate Zn(2+).

The protein belongs to the KduI family. Requires Zn(2+) as cofactor.

It carries out the reaction 5-dehydro-4-deoxy-D-glucuronate = 3-deoxy-D-glycero-2,5-hexodiulosonate. It functions in the pathway glycan metabolism; pectin degradation; 2-dehydro-3-deoxy-D-gluconate from pectin: step 4/5. Catalyzes the isomerization of 5-dehydro-4-deoxy-D-glucuronate to 3-deoxy-D-glycero-2,5-hexodiulosonate. The protein is 4-deoxy-L-threo-5-hexosulose-uronate ketol-isomerase of Halalkalibacterium halodurans (strain ATCC BAA-125 / DSM 18197 / FERM 7344 / JCM 9153 / C-125) (Bacillus halodurans).